The following is a 264-amino-acid chain: Sulfur carrier protein FdhD (264 aa).

Cys-107 (cysteine persulfide intermediate) is an active-site residue.

The protein belongs to the FdhD family.

It is found in the cytoplasm. Required for formate dehydrogenase (FDH) activity. Acts as a sulfur carrier protein that transfers sulfur from IscS to the molybdenum cofactor prior to its insertion into FDH. This chain is Sulfur carrier protein FdhD, found in Staphylococcus haemolyticus (strain JCSC1435).